Consider the following 1029-residue polypeptide: Chitin synthase 2 (1029 aa).

Disordered regions lie at residues 1 to 160 (MDRP…GARS), 174 to 216 (SDVD…SHLR), and 234 to 257 (AHYG…QKSR). Positions 61–77 (PSVSSIHSRPSSISNIP) are enriched in low complexity. Over residues 244-257 (DQQRRGVREPQKSR) the composition is skewed to basic and acidic residues. Residue N348 is glycosylated (N-linked (GlcNAc...) asparagine). A run of 8 helical transmembrane segments spans residues 639–659 (WLNG…QLWA), 681–701 (VLFT…VAGG), 716–736 (LYIF…QFIL), 752–772 (SMVI…YIVI), 791–811 (NLIV…FIYL), 820–840 (SIQY…YAFC), 918–938 (YMVV…SEIY), and 952–972 (ILWS…TFAI).

It belongs to the chitin synthase family. Class II subfamily.

It is found in the cell membrane. It carries out the reaction [(1-&gt;4)-N-acetyl-beta-D-glucosaminyl](n) + UDP-N-acetyl-alpha-D-glucosamine = [(1-&gt;4)-N-acetyl-beta-D-glucosaminyl](n+1) + UDP + H(+). Its function is as follows. Polymerizes chitin, a structural polymer of the cell wall and septum, by transferring the sugar moiety of UDP-GlcNAc to the non-reducing end of the growing chitin polymer. Plays an important role in cell wall integrity and has distinct functions in invasive hyphae and vegetative hyphae, but is not involved in plant infection. The sequence is that of Chitin synthase 2 from Pyricularia oryzae (strain 70-15 / ATCC MYA-4617 / FGSC 8958) (Rice blast fungus).